We begin with the raw amino-acid sequence, 354 residues long: Protein-glutamate methylesterase/protein-glutamine glutaminase 2 (354 aa).

A Response regulatory domain is found at 5–122; the sequence is RVLIVDDSAL…SLKIKEVAEE (118 aa). Asp56 is subject to 4-aspartylphosphate. The region spanning 159–354 is the CheB-type methylesterase domain; the sequence is PDTSFKKLIL…IADRIVELVR (196 aa). Residues Ser172, His199, and Asp298 contribute to the active site.

It belongs to the CheB family. Post-translationally, phosphorylated by CheA. Phosphorylation of the N-terminal regulatory domain activates the methylesterase activity.

The protein resides in the cytoplasm. It carries out the reaction [protein]-L-glutamate 5-O-methyl ester + H2O = L-glutamyl-[protein] + methanol + H(+). It catalyses the reaction L-glutaminyl-[protein] + H2O = L-glutamyl-[protein] + NH4(+). In terms of biological role, involved in chemotaxis. Part of a chemotaxis signal transduction system that modulates chemotaxis in response to various stimuli. Catalyzes the demethylation of specific methylglutamate residues introduced into the chemoreceptors (methyl-accepting chemotaxis proteins or MCP) by CheR. Also mediates the irreversible deamidation of specific glutamine residues to glutamic acid. The chain is Protein-glutamate methylesterase/protein-glutamine glutaminase 2 from Carboxydothermus hydrogenoformans (strain ATCC BAA-161 / DSM 6008 / Z-2901).